The primary structure comprises 260 residues: 5'-nucleotidase SurE (260 aa).

A divalent metal cation-binding residues include Asp-13, Asp-14, Ser-44, and Asn-102.

Belongs to the SurE nucleotidase family. Requires a divalent metal cation as cofactor.

The protein resides in the cytoplasm. The enzyme catalyses a ribonucleoside 5'-phosphate + H2O = a ribonucleoside + phosphate. Its function is as follows. Nucleotidase that shows phosphatase activity on nucleoside 5'-monophosphates. This is 5'-nucleotidase SurE from Christiangramia forsetii (strain DSM 17595 / CGMCC 1.15422 / KT0803) (Gramella forsetii).